The chain runs to 273 residues: Large ribosomal subunit protein uL2 (273 aa).

Positions 228–273 (VDHPHGGGEGKTSGGRHPVTPWGFPTKGKKTRKNKRTSKFIVKKRK) are disordered. Residues 254–273 (KGKKTRKNKRTSKFIVKKRK) show a composition bias toward basic residues.

The protein belongs to the universal ribosomal protein uL2 family. Part of the 50S ribosomal subunit. Forms a bridge to the 30S subunit in the 70S ribosome.

Functionally, one of the primary rRNA binding proteins. Required for association of the 30S and 50S subunits to form the 70S ribosome, for tRNA binding and peptide bond formation. It has been suggested to have peptidyltransferase activity; this is somewhat controversial. Makes several contacts with the 16S rRNA in the 70S ribosome. This chain is Large ribosomal subunit protein uL2, found in Rickettsia peacockii (strain Rustic).